The following is a 128-amino-acid chain: Iron-sulfur cluster insertion protein ErpA (128 aa).

The iron-sulfur cluster site is built by cysteine 56, cysteine 120, and cysteine 122.

The protein belongs to the HesB/IscA family. In terms of assembly, homodimer. Iron-sulfur cluster serves as cofactor.

Functionally, required for insertion of 4Fe-4S clusters for at least IspG. The protein is Iron-sulfur cluster insertion protein ErpA of Xanthomonas axonopodis pv. citri (strain 306).